A 276-amino-acid chain; its full sequence is MQTITNAWFVQGMIKATTDAWLKGWDERNGGNLTLRLDNADIAPFEADFHQKPRYIALSQPMPLLANTAFIVTGSGKFFRNVQLDPTANLGVVKVDSDGAGYHILWGLTNEAVPTSELPAHFLSHCERIKATDGKDRVIMHCHATNLIALTYVLENDSAFITRKLWEGSTECLVVFPDGVGILPWMVPGTDEIGQATAQDMQKHSLVLWPFHGVFGSGPTLDEAFGLIDTAEKSAEVLVKVYSMGGMKQTITQEELIALGKRFGVTPMKSALELYK.

Glu117 is a catalytic residue. The Zn(2+) site is built by His141, His143, and His212.

This sequence belongs to the aldolase class II family. RhaD subfamily. As to quaternary structure, homotetramer. The cofactor is Zn(2+).

It localises to the cytoplasm. The enzyme catalyses L-rhamnulose 1-phosphate = (S)-lactaldehyde + dihydroxyacetone phosphate. It participates in carbohydrate degradation; L-rhamnose degradation; glycerone phosphate from L-rhamnose: step 3/3. Functionally, catalyzes the reversible cleavage of L-rhamnulose-1-phosphate to dihydroxyacetone phosphate (DHAP) and L-lactaldehyde. The chain is Rhamnulose-1-phosphate aldolase from Enterobacter sp. (strain 638).